A 555-amino-acid chain; its full sequence is MDKRHDPSRRIIAPHGTQLSCKSWLTEAPMRMLMNNLHPDVAERPEDLVVYGGIGRAARDWDCYDKIIEVLQRLEDDETLLVQSGKPVGVFRTHADAPRVLIANSNLVPHWANWEHFNELDKLGLAMYGQMTAGSWIYIGTQGIVQGTYETFVSVAKQHFEGISKGKWILTGGLGGMGGAQTLAGTMAGFSVLACEVDETRIDFRLRTRYVDKKATSLDEALAMIEEANQAGKPVSVGLLANAADVFAELVKRGVTPDVVTDQTSAHDPLNGYLPQGWTMAEAAAMRKTDEAGVVKAAKASMAVQVQAMLDLQTAGAATLDYGNNIRQMAFEMGVENAFDFPGFVPAYIRPLFCEGIGPFRWVALSGDPEDIYKTDAKVKELIPDNPHLHNWLDMARERIAFQGLPARICWVGLKDRARLALAFNEMVKKGELSAPVVIGRDHLDSGSVASPNRETESMLDGSDAVSDWPLLNALLNTASGATWVSLHHGGGVGMGFSQHSGVVIVCDGTDAAAKRVGRVLWNDPATGVMRHADAGYEIAKNCAKEQGLDLPMQE.

NAD(+) is bound by residues 52–53 (GG), Q130, 176–178 (GMG), E196, R201, 242–243 (NA), 263–267 (QTSAH), 273–274 (YL), and Y322. The active site involves C410. G492 serves as a coordination point for NAD(+).

This sequence belongs to the urocanase family. Requires NAD(+) as cofactor.

The protein localises to the cytoplasm. It carries out the reaction 4-imidazolone-5-propanoate = trans-urocanate + H2O. Its pathway is amino-acid degradation; L-histidine degradation into L-glutamate; N-formimidoyl-L-glutamate from L-histidine: step 2/3. Its function is as follows. Catalyzes the conversion of urocanate to 4-imidazolone-5-propionate. This Shewanella baltica (strain OS155 / ATCC BAA-1091) protein is Urocanate hydratase.